A 492-amino-acid chain; its full sequence is Glutamyl-tRNA(Gln) amidotransferase subunit A (492 aa).

Residues lysine 78 and serine 158 each act as charge relay system in the active site. Serine 182 functions as the Acyl-ester intermediate in the catalytic mechanism.

The protein belongs to the amidase family. GatA subfamily. As to quaternary structure, heterotrimer of A, B and C subunits.

It carries out the reaction L-glutamyl-tRNA(Gln) + L-glutamine + ATP + H2O = L-glutaminyl-tRNA(Gln) + L-glutamate + ADP + phosphate + H(+). In terms of biological role, allows the formation of correctly charged Gln-tRNA(Gln) through the transamidation of misacylated Glu-tRNA(Gln) in organisms which lack glutaminyl-tRNA synthetase. The reaction takes place in the presence of glutamine and ATP through an activated gamma-phospho-Glu-tRNA(Gln). This Rhodopseudomonas palustris (strain BisB18) protein is Glutamyl-tRNA(Gln) amidotransferase subunit A.